Reading from the N-terminus, the 376-residue chain is DNA double-strand break repair protein Mre11 (376 aa).

Residues aspartate 5, histidine 7, aspartate 46, and aspartate 81 each contribute to the Mn(2+) site. The active-site Proton donor is histidine 82. Mn(2+) is bound by residues histidine 159, histidine 189, and histidine 191.

It belongs to the MRE11/RAD32 family. Homodimer. Forms a heterotetramer composed of two Mre11 subunits and two Rad50 subunits. It depends on Mn(2+) as a cofactor.

Its activity is regulated as follows. Nuclease activity is regulated by Rad50. In terms of biological role, part of the Rad50/Mre11 complex, which is involved in the early steps of DNA double-strand break (DSB) repair. The complex may facilitate opening of the processed DNA ends to aid in the recruitment of HerA and NurA. Mre11 binds to DSB ends and has both double-stranded 3'-5' exonuclease activity and single-stranded endonuclease activity. The chain is DNA double-strand break repair protein Mre11 from Thermoplasma acidophilum (strain ATCC 25905 / DSM 1728 / JCM 9062 / NBRC 15155 / AMRC-C165).